The chain runs to 393 residues: S-adenosylmethionine synthase (393 aa).

A Mg(2+)-binding site is contributed by glutamate 9. Histidine 15 lines the ATP pocket. Residue glutamate 43 coordinates K(+). Residues glutamate 56 and glutamine 99 each contribute to the L-methionine site. Residues 167 to 169 (DGK), 235 to 238 (SGRF), aspartate 246, 252 to 253 (RK), alanine 269, lysine 273, and lysine 277 each bind ATP. L-methionine is bound at residue aspartate 246. Lysine 277 is an L-methionine binding site.

This sequence belongs to the AdoMet synthase family. Homotetramer. Requires Mn(2+) as cofactor. The cofactor is Mg(2+). Co(2+) serves as cofactor. K(+) is required as a cofactor.

Its subcellular location is the cytoplasm. It carries out the reaction L-methionine + ATP + H2O = S-adenosyl-L-methionine + phosphate + diphosphate. Its pathway is amino-acid biosynthesis; S-adenosyl-L-methionine biosynthesis; S-adenosyl-L-methionine from L-methionine: step 1/1. Functionally, catalyzes the formation of S-adenosylmethionine from methionine and ATP. The reaction comprises two steps that are both catalyzed by the same enzyme: formation of S-adenosylmethionine (AdoMet) and triphosphate, and subsequent hydrolysis of the triphosphate. This chain is S-adenosylmethionine synthase (SAM), found in Camellia sinensis (Tea plant).